Consider the following 513-residue polypeptide: GTPase Obg (513 aa).

The 158-residue stretch at 3-160 folds into the Obg domain; sequence THFVDRVVVH…LDLHLEVKTL (158 aa). One can recognise an OBG-type G domain in the interval 161–337; that stretch reads ADVALVGFPS…LSFAMAELVS (177 aa). Residues 167–174, 192–196, 213–216, 289–292, and 318–320 each bind GTP; these read GFPSAGKS, FTTLV, DVPG, NKAD, and SAV. The Mg(2+) site is built by Ser-174 and Thr-194. Residues 355-444 form the OCT domain; the sequence is PRAVDDQGFK…ANAVVFDWEP (90 aa). The segment at 457–513 is disordered; it reads GSDLRLEDHSRPTRDEKRLQERERRAAKVTARDELEAERRAGHWTAADEADEELSQR. Residues 458–497 show a composition bias toward basic and acidic residues; that stretch reads SDLRLEDHSRPTRDEKRLQERERRAAKVTARDELEAERRA. Residues 504 to 513 show a composition bias toward acidic residues; the sequence is DEADEELSQR.

The protein belongs to the TRAFAC class OBG-HflX-like GTPase superfamily. OBG GTPase family. Monomer. Mg(2+) is required as a cofactor.

The protein localises to the cytoplasm. Its function is as follows. An essential GTPase which binds GTP, GDP and possibly (p)ppGpp with moderate affinity, with high nucleotide exchange rates and a fairly low GTP hydrolysis rate. Plays a role in control of the cell cycle, stress response, ribosome biogenesis and in those bacteria that undergo differentiation, in morphogenesis control. This is GTPase Obg from Kineococcus radiotolerans (strain ATCC BAA-149 / DSM 14245 / SRS30216).